The chain runs to 157 residues: MATRTQAREAVIGMLYAYDLGNESIIEIARSMLEEKKIKNKQQDFAFSLLQGVIEHLSQIDLCIAPYLKEWEFSRLGGMERAMLRLGAFEILYTETDTPVIINEAVELGKMYGGEDNAPRFINGVLDALSKAHTKNKKSEDCSKTQDIINDALGKES.

This sequence belongs to the NusB family.

Its function is as follows. Involved in transcription antitermination. Required for transcription of ribosomal RNA (rRNA) genes. Binds specifically to the boxA antiterminator sequence of the ribosomal RNA (rrn) operons. The sequence is that of Transcription antitermination protein NusB from Helicobacter hepaticus (strain ATCC 51449 / 3B1).